The chain runs to 149 residues: Evolved beta-galactosidase subunit beta (149 aa).

Heterooctamer of 4 alpha and 4 beta subunits.

In terms of biological role, required for full activity of the EbgA enzyme. Exact function not known. The chain is Evolved beta-galactosidase subunit beta (ebgC) from Escherichia coli O6:H1 (strain CFT073 / ATCC 700928 / UPEC).